A 300-amino-acid chain; its full sequence is uncharacterized protein (300 aa).

The protein belongs to the histone deacetylase family.

Its function is as follows. Putative deacetylase. This is an uncharacterized protein from Picosynechococcus sp. (strain ATCC 27264 / PCC 7002 / PR-6) (Agmenellum quadruplicatum).